We begin with the raw amino-acid sequence, 475 residues long: Ribulose bisphosphate carboxylase large chain (475 aa).

The propeptide occupies 1-2; the sequence is MS. N-acetylproline is present on Pro3. Lys14 bears the N6,N6,N6-trimethyllysine mark. Substrate is bound by residues Asn123 and Thr173. Lys175 functions as the Proton acceptor in the catalytic mechanism. Lys177 is a binding site for substrate. Mg(2+) is bound by residues Lys201, Asp203, and Glu204. Lys201 is modified (N6-carboxylysine). The Proton acceptor role is filled by His294. Arg295, His327, and Ser379 together coordinate substrate.

Belongs to the RuBisCO large chain family. Type I subfamily. In terms of assembly, heterohexadecamer of 8 large chains and 8 small chains. Mg(2+) serves as cofactor.

The protein resides in the plastid. The protein localises to the chloroplast. It carries out the reaction 2 (2R)-3-phosphoglycerate + 2 H(+) = D-ribulose 1,5-bisphosphate + CO2 + H2O. It catalyses the reaction D-ribulose 1,5-bisphosphate + O2 = 2-phosphoglycolate + (2R)-3-phosphoglycerate + 2 H(+). RuBisCO catalyzes two reactions: the carboxylation of D-ribulose 1,5-bisphosphate, the primary event in carbon dioxide fixation, as well as the oxidative fragmentation of the pentose substrate in the photorespiration process. Both reactions occur simultaneously and in competition at the same active site. This chain is Ribulose bisphosphate carboxylase large chain, found in Chlorella vulgaris (Green alga).